The chain runs to 771 residues: Semaphorin-3A (771 aa).

The N-terminal stretch at 1–20 (MGWLTRIVCLFWGVLLTARA) is a signal peptide. Residues 31–514 (RLKLSYKEML…STAGVAQLPL (484 aa)) enclose the Sema domain. Asparagine 53 carries an N-linked (GlcNAc...) asparagine glycan. Cysteine 103 and cysteine 114 are joined by a disulfide. Residue asparagine 125 is glycosylated (N-linked (GlcNAc...) asparagine). Cystine bridges form between cysteine 132–cysteine 141, cysteine 269–cysteine 381, cysteine 293–cysteine 341, and cysteine 517–cysteine 535. The 85-residue stretch at 580–664 (PEERIIYGVE…GFIQTLLKVT (85 aa)) folds into the Ig-like C2-type domain. Asparagine 590 carries N-linked (GlcNAc...) asparagine glycosylation. Cysteines 649 and 722 form a disulfide. Residues 728–737 (RDRKQRRQRP) are compositionally biased toward basic residues. The disordered stretch occupies residues 728 to 771 (RDRKQRRQRPGHTPGNSNKWKHLQENKKGRNRRTHEFERAPRSV). Residues 749–771 (HLQENKKGRNRRTHEFERAPRSV) are compositionally biased toward basic and acidic residues.

Belongs to the semaphorin family. As to quaternary structure, interacts with PLXND1. As to expression, expressed in the dorsal root ganglia.

The protein resides in the secreted. Involved in the development of the olfactory system and in neuronal control of puberty. Induces the collapse and paralysis of neuronal growth cones. Could serve as a ligand that guides specific growth cones by a motility-inhibiting mechanism. Binds to the complex neuropilin-1/plexin-1. The protein is Semaphorin-3A (SEMA3A) of Homo sapiens (Human).